A 288-amino-acid chain; its full sequence is ATP synthase gamma chain (288 aa).

This sequence belongs to the ATPase gamma chain family. As to quaternary structure, F-type ATPases have 2 components, CF(1) - the catalytic core - and CF(0) - the membrane proton channel. CF(1) has five subunits: alpha(3), beta(3), gamma(1), delta(1), epsilon(1). CF(0) has three main subunits: a, b and c.

It is found in the cell inner membrane. In terms of biological role, produces ATP from ADP in the presence of a proton gradient across the membrane. The gamma chain is believed to be important in regulating ATPase activity and the flow of protons through the CF(0) complex. In Chromobacterium violaceum (strain ATCC 12472 / DSM 30191 / JCM 1249 / CCUG 213 / NBRC 12614 / NCIMB 9131 / NCTC 9757 / MK), this protein is ATP synthase gamma chain.